The following is a 493-amino-acid chain: MGLLDPSQKEVLRFAVNCRILTLVLQALFNLIIPDHHADAFCPPRLAPSGSADQLVEGLLGGLSRWDAEHFLFIAEHGYLYEHNFAFFPGFPLALLMGTELLRPLQGLLSQRSCLLVSVALLNLLFSVLAAVALHDLGCLVLHCPRQALCAALLFCISPANVFLAAGYSEALFAFLTFSAMGQLERGRGWASGLLFALAAGVRSNGLVSLGFLLHSQCRGFCSSLAVLSPWKPLVKLMASVCLSVLIVSLPFALFQYRAYIQFCSPGSAPSIPEPLLQLAADKGYRLAGENAPPWCSWDLPLIYNYIQDVYWNVGLLRYYELKQVPNFLLATPVTVLVVWATWTYVTTHPWLCLTLGLQRTKDRENPEKPHRGFLSPKVFVYLVHAAALLVFGGLCMHVQVLTRFLASSTPIMYWFPAHLLQDQEPLLRCVDTEPGKLPQEKSPPGQKAPRNCLMKLFYDWKRCSPVTRCVLVYFLTYWLLGLILHCNFLPWT.

The Cytoplasmic segment spans residues 1 to 13; sequence MGLLDPSQKEVLR. Residues 14–34 form a helical membrane-spanning segment; that stretch reads FAVNCRILTLVLQALFNLIIP. The Lumenal segment spans residues 35–77; sequence DHHADAFCPPRLAPSGSADQLVEGLLGGLSRWDAEHFLFIAEH. A helical transmembrane segment spans residues 78–98; that stretch reads GYLYEHNFAFFPGFPLALLMG. Residues 99-113 lie on the Cytoplasmic side of the membrane; that stretch reads TELLRPLQGLLSQRS. A helical transmembrane segment spans residues 114 to 134; sequence CLLVSVALLNLLFSVLAAVAL. The Lumenal segment spans residues 135–136; it reads HD. Residues 137-157 traverse the membrane as a helical segment; sequence LGCLVLHCPRQALCAALLFCI. Residues 158-161 lie on the Cytoplasmic side of the membrane; the sequence is SPAN. Residues 162 to 182 form a helical membrane-spanning segment; sequence VFLAAGYSEALFAFLTFSAMG. At 183-192 the chain is on the lumenal side; the sequence is QLERGRGWAS. Residues 193 to 213 traverse the membrane as a helical segment; that stretch reads GLLFALAAGVRSNGLVSLGFL. Residues 214–234 are Cytoplasmic-facing; the sequence is LHSQCRGFCSSLAVLSPWKPL. The chain crosses the membrane as a helical span at residues 235–255; sequence VKLMASVCLSVLIVSLPFALF. At 256–327 the chain is on the lumenal side; it reads QYRAYIQFCS…RYYELKQVPN (72 aa). Residues 328-348 form a helical membrane-spanning segment; it reads FLLATPVTVLVVWATWTYVTT. At 349-378 the chain is on the cytoplasmic side; that stretch reads HPWLCLTLGLQRTKDRENPEKPHRGFLSPK. A helical membrane pass occupies residues 379–399; that stretch reads VFVYLVHAAALLVFGGLCMHV. Residues 400–469 lie on the Lumenal side of the membrane; that stretch reads QVLTRFLASS…DWKRCSPVTR (70 aa). Residues 470 to 490 traverse the membrane as a helical segment; the sequence is CVLVYFLTYWLLGLILHCNFL. The Cytoplasmic segment spans residues 491–493; the sequence is PWT.

The protein belongs to the PIGV family. In terms of processing, not N-glycosylated.

It localises to the endoplasmic reticulum membrane. Its pathway is glycolipid biosynthesis; glycosylphosphatidylinositol-anchor biosynthesis. Alpha-1,6-mannosyltransferase that catalyzes the transfer of the second mannose, via an alpha-1,6 bond, from a dolichol-phosphate-mannose (Dol-P-Man) to the alpha-D-Man-(1-&gt;4)-alpha-D-GlcN-(1-&gt;6)-(1-radyl,2-acyl-sn-glycero-3-phospho)-2-acyl-inositol (also termed H2) intermediate to generate an alpha-D-Man-(1-&gt;6)-alpha-D-Man-(1-&gt;4)-alpha-D-GlcN-(1-&gt;6)-(1-radyl,2-acyl-sn-glycero-3-phospho)-2-acyl-inositol (also termed H3) and participates in the seventh step of the glycosylphosphatidylinositol-anchor biosynthesis. Also transfers the second mannose on a 2-PEtn-alpha-D-Man-(1-&gt;4)-alpha-D-GlcN-(1-&gt;6)-(1-radyl,2-acyl-sn-glycero-3-phospho)-2-acyl-inositol (also termed H5). The protein is GPI alpha-1,6-mannosyltransferase 2 of Mus musculus (Mouse).